Here is a 99-residue protein sequence, read N- to C-terminus: Large ribosomal subunit protein bL27 (99 aa).

Residues 1-10 (MKLIFDIQLF) constitute a propeptide that is removed on maturation.

The protein belongs to the bacterial ribosomal protein bL27 family. In terms of processing, the N-terminus is cleaved by ribosomal processing cysteine protease Prp.

In Caldicellulosiruptor bescii (strain ATCC BAA-1888 / DSM 6725 / KCTC 15123 / Z-1320) (Anaerocellum thermophilum), this protein is Large ribosomal subunit protein bL27.